We begin with the raw amino-acid sequence, 576 residues long: Proline--tRNA ligase (576 aa).

The protein belongs to the class-II aminoacyl-tRNA synthetase family. ProS type 1 subfamily. Homodimer.

It localises to the cytoplasm. It carries out the reaction tRNA(Pro) + L-proline + ATP = L-prolyl-tRNA(Pro) + AMP + diphosphate. Catalyzes the attachment of proline to tRNA(Pro) in a two-step reaction: proline is first activated by ATP to form Pro-AMP and then transferred to the acceptor end of tRNA(Pro). As ProRS can inadvertently accommodate and process non-cognate amino acids such as alanine and cysteine, to avoid such errors it has two additional distinct editing activities against alanine. One activity is designated as 'pretransfer' editing and involves the tRNA(Pro)-independent hydrolysis of activated Ala-AMP. The other activity is designated 'posttransfer' editing and involves deacylation of mischarged Ala-tRNA(Pro). The misacylated Cys-tRNA(Pro) is not edited by ProRS. This Bordetella petrii (strain ATCC BAA-461 / DSM 12804 / CCUG 43448) protein is Proline--tRNA ligase.